Reading from the N-terminus, the 436-residue chain is MTDRTPPPGRARRLFSRTSWPEARFLADVLRTETFGGGLLLLGAVIALVWANSPWGGSYSALASWVPWPGGSDLHLDLDLATWAADGLLAIFFFVVGLELKREFVAGDLRDPRRAALPVIAAIGGMIVPALIYVGVNLSAGGENLRGWAIPTATDIAFALAVLAVIGSHLPQGLRAFLLTLAVVDDLLAITVIAIFYTGDFKLTPLLLALLPIALFGLLVQRRKTWWWALIPLAVVAWTLVHESGVHATVAGVLLGFTVPVLRGREGDRHGLAEHLEHRWRPVSAGFAVPVFAFFAAGVSLRGADLGAVITDPIVVGIVAGLVLGKVLGIFGSTFLLARFTRAELDRDITWTDLLGVSLLAGIGFTVSLLIGELAFEGGAADDNVKAAVLTGSLIAALLASIVLIRRNKAYRRIAVKERVDSNRDGVPDVFQHRDG.

Transmembrane regions (helical) follow at residues 35–55 (FGGGLLLLGAVIALVWANSPW), 80–100 (LATWAADGLLAIFFFVVGLEL), 116–136 (ALPVIAAIGGMIVPALIYVGV), 147–167 (GWAIPTATDIAFALAVLAVIG), 176–196 (AFLLTLAVVDDLLAITVIAIF), 201–221 (FKLTPLLLALLPIALFGLLVQ), 226–246 (WWWALIPLAVVAWTLVHESGV), 283–303 (VSAGFAVPVFAFFAAGVSLRG), 313–333 (PIVVGIVAGLVLGKVLGIFGS), 354–374 (LLGVSLLAGIGFTVSLLIGEL), and 385–405 (VKAAVLTGSLIAALLASIVLI).

Belongs to the NhaA Na(+)/H(+) (TC 2.A.33) antiporter family.

The protein resides in the cell membrane. The catalysed reaction is Na(+)(in) + 2 H(+)(out) = Na(+)(out) + 2 H(+)(in). Functionally, na(+)/H(+) antiporter that extrudes sodium in exchange for external protons. This is Na(+)/H(+) antiporter NhaA 1 from Salinispora tropica (strain ATCC BAA-916 / DSM 44818 / JCM 13857 / NBRC 105044 / CNB-440).